Consider the following 255-residue polypeptide: 3-deoxy-manno-octulosonate cytidylyltransferase (255 aa).

This sequence belongs to the KdsB family.

It is found in the cytoplasm. The enzyme catalyses 3-deoxy-alpha-D-manno-oct-2-ulosonate + CTP = CMP-3-deoxy-beta-D-manno-octulosonate + diphosphate. The protein operates within nucleotide-sugar biosynthesis; CMP-3-deoxy-D-manno-octulosonate biosynthesis; CMP-3-deoxy-D-manno-octulosonate from 3-deoxy-D-manno-octulosonate and CTP: step 1/1. Its pathway is bacterial outer membrane biogenesis; lipopolysaccharide biosynthesis. Functionally, activates KDO (a required 8-carbon sugar) for incorporation into bacterial lipopolysaccharide in Gram-negative bacteria. The chain is 3-deoxy-manno-octulosonate cytidylyltransferase from Xanthobacter autotrophicus (strain ATCC BAA-1158 / Py2).